The sequence spans 288 residues: Inorganic pyrophosphatase (288 aa).

Arginine 80 lines the diphosphate pocket. Residues aspartate 117, aspartate 122, and aspartate 154 each coordinate Mg(2+). Residues 252–271 (TPSYSDAAAQEIPSASPAPA) are disordered. Positions 258–271 (AAAQEIPSASPAPA) are enriched in low complexity.

Belongs to the PPase family. It depends on Mg(2+) as a cofactor.

It is found in the cytoplasm. It carries out the reaction diphosphate + H2O = 2 phosphate + H(+). The sequence is that of Inorganic pyrophosphatase (IPP1) from Candida albicans (strain SC5314 / ATCC MYA-2876) (Yeast).